The sequence spans 677 residues: DNA ligase (677 aa).

NAD(+) is bound by residues 34-38, 83-84, and E117; these read DAEYD and SL. K119 serves as the catalytic N6-AMP-lysine intermediate. Positions 140, 175, 283, and 307 each coordinate NAD(+). The Zn(2+) site is built by C401, C404, C419, and C425. Positions 594 to 677 constitute a BRCT domain; sequence SHLSLLHGKT…QYISPNTNEN (84 aa).

Belongs to the NAD-dependent DNA ligase family. LigA subfamily. The cofactor is Mg(2+). It depends on Mn(2+) as a cofactor.

The enzyme catalyses NAD(+) + (deoxyribonucleotide)n-3'-hydroxyl + 5'-phospho-(deoxyribonucleotide)m = (deoxyribonucleotide)n+m + AMP + beta-nicotinamide D-nucleotide.. Functionally, DNA ligase that catalyzes the formation of phosphodiester linkages between 5'-phosphoryl and 3'-hydroxyl groups in double-stranded DNA using NAD as a coenzyme and as the energy source for the reaction. It is essential for DNA replication and repair of damaged DNA. This is DNA ligase from Ehrlichia canis (strain Jake).